Reading from the N-terminus, the 235-residue chain is Claudin-16 (235 aa).

Residues 1–3 (MRD) lie on the Cytoplasmic side of the membrane. Residues 4 to 24 (LLQYIACFFAFFSAGFLIVAT) traverse the membrane as a helical segment. Residues 25 to 79 (WTDCWMVNADDSLEVSTKCRGLWWECVTNAFDGIRTCDEYDSILAEHPLKLVVTR) are Extracellular-facing. The helical transmembrane segment at 80–100 (ALMITADILAGFGFLTLLLGL) threads the bilayer. The Cytoplasmic portion of the chain corresponds to 101 to 115 (DCVKFLPDEPYIKVR). Residues 116–136 (ICFVAGATLLIAGTPGIIGSV) form a helical membrane-spanning segment. The Extracellular segment spans residues 137–169 (WYAVDVYVERSTLVLHNIFLGIQYKFGWSCWLG). Residues 170–190 (MAGSLGCFLAGAVLTCCLYLF) form a helical membrane-spanning segment. At 191–235 (KDVGPERNYPYSLRKAYSAAGVSMAKSYSAPRTETAKMYAVDTRV) the chain is on the cytoplasmic side. Residues 233-235 (TRV) carry the Interaction with TJP1 motif.

Belongs to the claudin family. As to quaternary structure, can form heteropolymeric tight junction strands with other claudins. Interacts with CLDN19. Interacts (via PDZ-binding motif TRV) with TJP1 (via PDZ domain). Cannot form tight junction strands on its own. As to expression, kidney-specific, including the thick ascending limb of Henle (TAL).

The protein resides in the cell junction. Its subcellular location is the tight junction. It is found in the cell membrane. The enzyme catalyses Mg(2+)(in) = Mg(2+)(out). The catalysed reaction is Ca(2+)(in) = Ca(2+)(out). It catalyses the reaction Na(+)(in) = Na(+)(out). It carries out the reaction K(+)(in) = K(+)(out). The enzyme catalyses Rb(+)(in) = Rb(+)(out). The catalysed reaction is Cs(+)(in) = Cs(+)(out). It catalyses the reaction Li(+)(in) = Li(+)(out). Functionally, forms paracellular channels: coassembles with CLDN19 into tight junction strands with cation-selective channels through the strands, conveying epithelial permeability in a process known as paracellular tight junction permeability. Involved in the maintenance of ion gradients along the nephron. In the thick ascending limb (TAL) of Henle's loop, facilitates sodium paracellular permeability from the interstitial compartment to the lumen, contributing to the lumen-positive transepithelial potential that drives paracellular magnesium and calcium reabsorption. The polypeptide is Claudin-16 (Homo sapiens (Human)).